We begin with the raw amino-acid sequence, 157 residues long: Peptide methionine sulfoxide reductase MsrA (157 aa).

Cys-13 is a catalytic residue.

It belongs to the MsrA Met sulfoxide reductase family.

The enzyme catalyses L-methionyl-[protein] + [thioredoxin]-disulfide + H2O = L-methionyl-(S)-S-oxide-[protein] + [thioredoxin]-dithiol. It carries out the reaction [thioredoxin]-disulfide + L-methionine + H2O = L-methionine (S)-S-oxide + [thioredoxin]-dithiol. Its function is as follows. Has an important function as a repair enzyme for proteins that have been inactivated by oxidation. Catalyzes the reversible oxidation-reduction of methionine sulfoxide in proteins to methionine. In Methanococcus maripaludis (strain C5 / ATCC BAA-1333), this protein is Peptide methionine sulfoxide reductase MsrA.